Consider the following 311-residue polypeptide: Ribosomal RNA large subunit methyltransferase F (311 aa).

This sequence belongs to the methyltransferase superfamily. METTL16/RlmF family.

It is found in the cytoplasm. It carries out the reaction adenosine(1618) in 23S rRNA + S-adenosyl-L-methionine = N(6)-methyladenosine(1618) in 23S rRNA + S-adenosyl-L-homocysteine + H(+). Functionally, specifically methylates the adenine in position 1618 of 23S rRNA. The sequence is that of Ribosomal RNA large subunit methyltransferase F from Pectobacterium carotovorum subsp. carotovorum (strain PC1).